An 88-amino-acid polypeptide reads, in one-letter code: Acylphosphatase (88 aa).

Positions 3–88 (AVDVLISGRV…RAGHQGFEVR (86 aa)) constitute an Acylphosphatase-like domain. Catalysis depends on residues R18 and N36.

The protein belongs to the acylphosphatase family.

The catalysed reaction is an acyl phosphate + H2O = a carboxylate + phosphate + H(+). This is Acylphosphatase (acyP) from Methanocella arvoryzae (strain DSM 22066 / NBRC 105507 / MRE50).